Reading from the N-terminus, the 363-residue chain is Wortmanamides biosynthesis cluster protein C (363 aa).

The next 7 membrane-spanning stretches (helical) occupy residues 15–35, 48–68, 95–115, 129–149, 175–195, 210–230, and 237–257; these read FVTL…RFVA, WLAV…LMAI, IAGL…ILAF, ICIY…CIFQ, ILGG…LAMI, VTVL…KIAV, and LYAF…ALLC. Residues 293 to 312 are disordered; that stretch reads SSSKNSRKHGPYDSDQSPGP. Asparagine 321 carries an N-linked (GlcNAc...) asparagine glycan. The tract at residues 344-363 is disordered; sequence SPITHPQAYSKQTTRQFDVV.

Belongs to the SAT4 family.

The protein resides in the membrane. Its pathway is secondary metabolite biosynthesis. Its function is as follows. Part of the gene cluster that mediates the biosynthesis of wortmanamides A and B, reduced long-chain polyketides amidated with a specific omega-amino acid, 5-aminopentanoic acid (5PA). The PKS modules of TwmB are involved in the synthesis of the polyketide backbone, whereas the non-canonical C domain of TwmB is a bonafide condensation domain that specifically selects 5PA and catalyzes amidation to release polyketide chain. The C domain clearly prefers C16 and C18 fatty acyl substrates, which is consistent with simultaneous formation of both octaketide and nonaketide acyl amides wortmanamides A and B. Because TwmB lacks a designated enoylreductase (ER) domain, the required activity is provided the enoyl reductase TwmE. The roles of the remaining enzymes have still to be clarified. This is Wortmanamides biosynthesis cluster protein C from Talaromyces wortmannii (Penicillium wortmannii).